We begin with the raw amino-acid sequence, 635 residues long: Glycosyltransferase-like protein gnt13 (635 aa).

The Cytoplasmic portion of the chain corresponds to M1 to N18. Residues F19–L38 traverse the membrane as a helical; Signal-anchor for type II membrane protein segment. The Extracellular portion of the chain corresponds to M39–W635. 2 N-linked (GlcNAc...) asparagine glycosylation sites follow: N41 and N179. Disordered regions lie at residues N300 to D358 and N389 to P458. A compositionally biased stretch (low complexity) spans N389–N456. N393 and N535 each carry an N-linked (GlcNAc...) asparagine glycan.

The protein belongs to the glycosyltransferase 8 family. Highly divergent.

It is found in the membrane. The polypeptide is Glycosyltransferase-like protein gnt13 (gnt13) (Dictyostelium discoideum (Social amoeba)).